The sequence spans 260 residues: Myb transcription factor 42 (260 aa).

2 HTH myb-type domains span residues 9–61 and 62–116; these read KAHT…INYL and RPDL…RRKL. 2 DNA-binding regions (H-T-H motif) span residues 37-61 and 89-112; these read WRSL…INYL and WSLI…NTHI.

As to expression, mainly expressed in the aerial parts and, to a lower extent, in roots.

Its subcellular location is the nucleus. Its function is as follows. Transcription factor that negatively regulates the expression of caffeic acid O-methyl-transferase genes (COMTs) and of other genes involved in the biosynthesis of lignin, thus preventing lignification. This Zea mays (Maize) protein is Myb transcription factor 42.